A 195-amino-acid polypeptide reads, in one-letter code: Cytochrome c oxidase subunit 1 (195 aa).

A helical membrane pass occupies residues 12–32; the sequence is MYWVLGFIFLFTLGGLTGIVL. Positions 42 and 43 each coordinate Mg(2+). Position 50 (H50) interacts with heme a3. Residue H52 participates in Fe(II)-heme a binding. The next 3 membrane-spanning stretches (helical) occupy residues 59–79, 88–108, and 131–151; these read AVFA…GLVL, FIVM…LGLA, and GSLM…EAFL.

The protein belongs to the heme-copper respiratory oxidase family. As to quaternary structure, component of the cytochrome c oxidase (complex IV, CIV), a multisubunit enzyme composed of a catalytic core of 3 subunits and several supernumerary subunits. The complex exists as a monomer or a dimer and forms supercomplexes (SCs) in the inner mitochondrial membrane with ubiquinol-cytochrome c oxidoreductase (cytochrome b-c1 complex, complex III, CIII). The cofactor is heme. Cu cation is required as a cofactor.

The protein resides in the mitochondrion inner membrane. The enzyme catalyses 4 Fe(II)-[cytochrome c] + O2 + 8 H(+)(in) = 4 Fe(III)-[cytochrome c] + 2 H2O + 4 H(+)(out). Its pathway is energy metabolism; oxidative phosphorylation. Its function is as follows. Component of the cytochrome c oxidase, the last enzyme in the mitochondrial electron transport chain which drives oxidative phosphorylation. The respiratory chain contains 3 multisubunit complexes succinate dehydrogenase (complex II, CII), ubiquinol-cytochrome c oxidoreductase (cytochrome b-c1 complex, complex III, CIII) and cytochrome c oxidase (complex IV, CIV), that cooperate to transfer electrons derived from NADH and succinate to molecular oxygen, creating an electrochemical gradient over the inner membrane that drives transmembrane transport and the ATP synthase. Cytochrome c oxidase is the component of the respiratory chain that catalyzes the reduction of oxygen to water. Electrons originating from reduced cytochrome c in the intermembrane space (IMS) are transferred via the dinuclear copper A center (CU(A)) of subunit 2 and heme A of subunit 1 to the active site in subunit 1, a binuclear center (BNC) formed by heme A3 and copper B (CU(B)). The BNC reduces molecular oxygen to 2 water molecules using 4 electrons from cytochrome c in the IMS and 4 protons from the mitochondrial matrix. In Albinaria turrita (Door snail), this protein is Cytochrome c oxidase subunit 1 (COI).